The chain runs to 119 residues: V-type proton ATPase subunit F (119 aa).

The protein belongs to the V-ATPase F subunit family. As to quaternary structure, V-ATPase is a heteromultimeric enzyme made up of two complexes: the ATP-hydrolytic V1 complex and the proton translocation V0 complex. The V1 complex consists of three catalytic AB heterodimers that form a heterohexamer, three peripheral stalks each consisting of EG heterodimers, one central rotor including subunits D and F, and the regulatory subunits C and H. The proton translocation complex V0 consists of the proton transport subunit a, a ring of proteolipid subunits c9c'', rotary subunit d, subunits e and f, and the accessory subunits ATP6AP1/Ac45 and ATP6AP2/PRR. As to expression, expressed in brain (at protein level).

It is found in the cytoplasmic vesicle. Its subcellular location is the secretory vesicle. The protein resides in the synaptic vesicle membrane. It localises to the clathrin-coated vesicle membrane. Functionally, subunit of the V1 complex of vacuolar(H+)-ATPase (V-ATPase), a multisubunit enzyme composed of a peripheral complex (V1) that hydrolyzes ATP and a membrane integral complex (V0) that translocates protons. V-ATPase is responsible for acidifying and maintaining the pH of intracellular compartments and in some cell types, is targeted to the plasma membrane, where it is responsible for acidifying the extracellular environment. In Bos taurus (Bovine), this protein is V-type proton ATPase subunit F (ATP6V1F).